The following is a 190-amino-acid chain: Segregation and condensation protein B (190 aa).

It belongs to the ScpB family. In terms of assembly, homodimer. Homodimerization may be required to stabilize the binding of ScpA to the Smc head domains. Component of a cohesin-like complex composed of ScpA, ScpB and the Smc homodimer, in which ScpA and ScpB bind to the head domain of Smc. The presence of the three proteins is required for the association of the complex with DNA.

The protein localises to the cytoplasm. Its function is as follows. Participates in chromosomal partition during cell division. May act via the formation of a condensin-like complex containing Smc and ScpA that pull DNA away from mid-cell into both cell halves. The chain is Segregation and condensation protein B from Bacillus mycoides (strain KBAB4) (Bacillus weihenstephanensis).